The primary structure comprises 443 residues: Thymidine phosphorylase (443 aa).

This sequence belongs to the thymidine/pyrimidine-nucleoside phosphorylase family. Homodimer.

The enzyme catalyses thymidine + phosphate = 2-deoxy-alpha-D-ribose 1-phosphate + thymine. It participates in pyrimidine metabolism; dTMP biosynthesis via salvage pathway; dTMP from thymine: step 1/2. In terms of biological role, the enzymes which catalyze the reversible phosphorolysis of pyrimidine nucleosides are involved in the degradation of these compounds and in their utilization as carbon and energy sources, or in the rescue of pyrimidine bases for nucleotide synthesis. In Aliivibrio salmonicida (strain LFI1238) (Vibrio salmonicida (strain LFI1238)), this protein is Thymidine phosphorylase.